We begin with the raw amino-acid sequence, 492 residues long: N-succinylglutamate 5-semialdehyde dehydrogenase (492 aa).

220–225 contributes to the NAD(+) binding site; sequence GSANTG. Residues Glu243 and Cys277 contribute to the active site.

Belongs to the aldehyde dehydrogenase family. AstD subfamily.

The enzyme catalyses N-succinyl-L-glutamate 5-semialdehyde + NAD(+) + H2O = N-succinyl-L-glutamate + NADH + 2 H(+). It functions in the pathway amino-acid degradation; L-arginine degradation via AST pathway; L-glutamate and succinate from L-arginine: step 4/5. Functionally, catalyzes the NAD-dependent reduction of succinylglutamate semialdehyde into succinylglutamate. This is N-succinylglutamate 5-semialdehyde dehydrogenase from Escherichia coli (strain 55989 / EAEC).